We begin with the raw amino-acid sequence, 340 residues long: Phenylalanine--tRNA ligase alpha subunit (340 aa).

Residue glutamate 254 participates in Mg(2+) binding.

This sequence belongs to the class-II aminoacyl-tRNA synthetase family. Phe-tRNA synthetase alpha subunit type 1 subfamily. In terms of assembly, tetramer of two alpha and two beta subunits. Mg(2+) serves as cofactor.

It localises to the cytoplasm. It catalyses the reaction tRNA(Phe) + L-phenylalanine + ATP = L-phenylalanyl-tRNA(Phe) + AMP + diphosphate + H(+). This Acidithiobacillus ferrooxidans (strain ATCC 23270 / DSM 14882 / CIP 104768 / NCIMB 8455) (Ferrobacillus ferrooxidans (strain ATCC 23270)) protein is Phenylalanine--tRNA ligase alpha subunit.